We begin with the raw amino-acid sequence, 97 residues long: uncharacterized protein (97 aa).

The signal sequence occupies residues 1-21 (MNKKFSISLLSTILAFLLVLG). The N-palmitoyl cysteine moiety is linked to residue cysteine 22. Cysteine 22 is lipidated: S-diacylglycerol cysteine.

To B.burgdorferi BBD15.

It localises to the cell membrane. This is an uncharacterized protein from Borreliella burgdorferi (strain ATCC 35210 / DSM 4680 / CIP 102532 / B31) (Borrelia burgdorferi).